We begin with the raw amino-acid sequence, 555 residues long: MGSESLVHVFLVSFIGQGHVNPLLRLGKRLAAKGLLVTFCTAECVGKEMRKSNGITDEPKPVGDGFIRFEFFKDRWAEDEPMRQDLDLYLPQLELVGKEVIPEMIKKNAEQGRPVSCLINNPFIPWVCDVAESLGLPSAMLWVQSAACLAAYYHYYHGLVPFPSESDMFCDVQIPSMPLLKYDEVPSFLYPTSPYPFLRRAILGQYGNLEKPFCILMDTFQELESEIIEYMARLCPIKAVGPLFKNPKAQNAVRGDFMEADDSIIGWLDTKPKSSVVYISFGSVVYLKQEQVDEIAHGLLSSGVSFIWVMKPPHPDSGFELLVLPEGFLEKAGDRGKVVQWSPQEKILEHPSTACFVTHCGWNSTMESLTSGMPVVAFPQWGDQVTDAKYLVDEFKVGVRMCRGEAEDRVIPRDEVEKCLLEATSGSKAAEMKQNALKWKAAAEAAFSEGGSSDRNLQAFVDEVRRISASLNSKSSAVGYVKSKINGVVEYVDSKLNGKAAPVEEANTRTNGIAKVEQPKAANGKVEIAELTPINGKVEIAELKPINGKVELVES.

Residue histidine 19 is the Proton acceptor of the active site. Histidine 19 contributes to the an anthocyanidin binding site. 6 residues coordinate UDP-alpha-D-glucose: glutamine 344, histidine 359, tryptophan 362, asparagine 363, serine 364, and glutamate 367. Glycine 382 is a binding site for an anthocyanidin. Residues aspartate 383 and glutamine 384 each coordinate UDP-alpha-D-glucose.

This sequence belongs to the UDP-glycosyltransferase family. As to expression, highest expression detected in fruit, with lower levels detected in flower and petiole. Barely detectable in leaf and root.

The enzyme catalyses (E)-cinnamate + UDP-alpha-D-glucose = 1-O-(trans-cinnamoyl)-beta-D-glucose + UDP. Broad spectrum multifunctional glucosyltransferase. Catalyzes the formation of cinnamic acid and p-coumaric acid glucose esters during fruit ripening. Accepted substrates range from derivatives of cinnamic acid and benzoic acid to heterocyclic and aliphatic compounds, resulting in the formation of O- and S-glucose esters and O-glucosides. May also be involved in detoxification of xenobiotics. This chain is Cinnamate beta-D-glucosyltransferase, found in Fragaria ananassa (Strawberry).